Reading from the N-terminus, the 155-residue chain is Desiccation-related protein clone PCC6-19 (155 aa).

The interval 1 to 155 is disordered; it reads MAQFGGEKYG…IKEKLPGGQH (155 aa). Gly residues-rich tracts occupy residues 27-39 and 47-76; these read AHRG…GGQQ and GVLG…GALG. Positions 83–92 are enriched in low complexity; it reads GSSSSSSSSE. Polar residues predominate over residues 118-135; the sequence is TTTDQQQYGTAATHGQAQ. A compositionally biased stretch (basic and acidic residues) spans 136–155; sequence QHEKKGIMDKIKEKLPGGQH.

It belongs to the plant dehydrin family.

The chain is Desiccation-related protein clone PCC6-19 from Craterostigma plantagineum (Blue gem).